Consider the following 575-residue polypeptide: 5-aminolevulinate synthase, mitochondrial (575 aa).

The N-terminal 55 residues, 1–55 (MESITRVSMSVCPFVKSSSAQALRQLSKNSALTSQARQCPFMGAALNAKESTRSY), are a transit peptide targeting the mitochondrion. 3 residues coordinate substrate: arginine 124, serine 237, and lysine 256. Residues serine 289, histidine 317, and threonine 361 each contribute to the pyridoxal 5'-phosphate site. Lysine 364 is a catalytic residue. Lysine 364 carries the post-translational modification N6-(pyridoxal phosphate)lysine. Residues threonine 393 and threonine 394 each coordinate pyridoxal 5'-phosphate. Residue threonine 479 coordinates substrate.

This sequence belongs to the class-II pyridoxal-phosphate-dependent aminotransferase family. As to quaternary structure, homodimer. Pyridoxal 5'-phosphate serves as cofactor.

The protein localises to the mitochondrion matrix. The catalysed reaction is succinyl-CoA + glycine + H(+) = 5-aminolevulinate + CO2 + CoA. Its pathway is porphyrin-containing compound metabolism; protoporphyrin-IX biosynthesis; 5-aminolevulinate from glycine: step 1/1. Its function is as follows. Catalyzes the synthesis of 5-aminolevulinate (ALA) from succinyl-CoA and glycine, the first and rate-limiting step in heme biosynthesis. This chain is 5-aminolevulinate synthase, mitochondrial (HEM1), found in Debaryomyces hansenii (strain ATCC 36239 / CBS 767 / BCRC 21394 / JCM 1990 / NBRC 0083 / IGC 2968) (Yeast).